The chain runs to 150 residues: Ribonuclease H (150 aa).

The RNase H type-1 domain occupies 1 to 146; the sequence is MPELFAYTDG…ADELARAGMA (146 aa). Asp9, Glu52, Asp74, and Asp138 together coordinate Mg(2+).

Belongs to the RNase H family. Monomer. The cofactor is Mg(2+).

It localises to the cytoplasm. The enzyme catalyses Endonucleolytic cleavage to 5'-phosphomonoester.. Its function is as follows. Endonuclease that specifically degrades the RNA of RNA-DNA hybrids. This is Ribonuclease H from Roseobacter denitrificans (strain ATCC 33942 / OCh 114) (Erythrobacter sp. (strain OCh 114)).